We begin with the raw amino-acid sequence, 374 residues long: Chaperone protein DnaJ (374 aa).

The J domain occupies 4-68 (DYYEILGVSR…EMKARFDRFG (65 aa)). Residues 132–214 (GGDKELTIKH…CGGRGQKEAT (83 aa)) form a CR-type zinc finger. Residues Cys145, Cys148, Cys162, Cys165, Cys188, Cys191, Cys202, and Cys205 each contribute to the Zn(2+) site. 4 CXXCXGXG motif repeats span residues 145–152 (CGTCNGSG), 162–169 (CSTCGGTG), 188–195 (CPSCNGSG), and 202–209 (CVDCGGRG).

Belongs to the DnaJ family. As to quaternary structure, homodimer. The cofactor is Zn(2+).

The protein localises to the cytoplasm. Its function is as follows. Participates actively in the response to hyperosmotic and heat shock by preventing the aggregation of stress-denatured proteins and by disaggregating proteins, also in an autonomous, DnaK-independent fashion. Unfolded proteins bind initially to DnaJ; upon interaction with the DnaJ-bound protein, DnaK hydrolyzes its bound ATP, resulting in the formation of a stable complex. GrpE releases ADP from DnaK; ATP binding to DnaK triggers the release of the substrate protein, thus completing the reaction cycle. Several rounds of ATP-dependent interactions between DnaJ, DnaK and GrpE are required for fully efficient folding. Also involved, together with DnaK and GrpE, in the DNA replication of plasmids through activation of initiation proteins. In Trichodesmium erythraeum (strain IMS101), this protein is Chaperone protein DnaJ.